A 115-amino-acid chain; its full sequence is uncharacterized protein (115 aa).

The signal sequence occupies residues 1–24; sequence MLPLCLTFLSFFLSLGGSFKAVMT. A run of 2 helical transmembrane segments spans residues 39–59 and 93–113; these read FWIF…ALAI and YLTS…FLLS.

It is found in the membrane. This is an uncharacterized protein from Saccharomyces cerevisiae (strain ATCC 204508 / S288c) (Baker's yeast).